The sequence spans 459 residues: Ribulose bisphosphate carboxylase large chain (459 aa).

Residue lysine 4 is modified to N6,N6,N6-trimethyllysine. The substrate site is built by asparagine 113 and threonine 163. Residue lysine 165 is the Proton acceptor of the active site. Lysine 167 is a substrate binding site. Lysine 191, aspartate 193, and glutamate 194 together coordinate Mg(2+). Lysine 191 carries the post-translational modification N6-carboxylysine. Histidine 284 acts as the Proton acceptor in catalysis. The substrate site is built by arginine 285, histidine 317, and serine 369.

It belongs to the RuBisCO large chain family. Type I subfamily. Heterohexadecamer of 8 large chains and 8 small chains; disulfide-linked. The disulfide link is formed within the large subunit homodimers. Requires Mg(2+) as cofactor. In terms of processing, the disulfide bond which can form in the large chain dimeric partners within the hexadecamer appears to be associated with oxidative stress and protein turnover.

It localises to the plastid. The protein resides in the chloroplast. The catalysed reaction is 2 (2R)-3-phosphoglycerate + 2 H(+) = D-ribulose 1,5-bisphosphate + CO2 + H2O. It carries out the reaction D-ribulose 1,5-bisphosphate + O2 = 2-phosphoglycolate + (2R)-3-phosphoglycerate + 2 H(+). Functionally, ruBisCO catalyzes two reactions: the carboxylation of D-ribulose 1,5-bisphosphate, the primary event in carbon dioxide fixation, as well as the oxidative fragmentation of the pentose substrate in the photorespiration process. Both reactions occur simultaneously and in competition at the same active site. In Parnassia fimbriata (Fringed grass-of-Parnassus), this protein is Ribulose bisphosphate carboxylase large chain.